The following is a 436-amino-acid chain: MANVVVIGAQWGDEGKGKITDLLSRSADVVVRYQGGVNAGHTIVVDDKVLKLHLIPSGILYRETICLIGSGTVVDPKILLKEIDMLIDNGIDISGLKISSTSHVTMPYHRLLDEAMEADRGSNKIGTTGRGIGPTYADKSQRNGIRIRDLLNEDRLRDVIEIPLKEKNGLLEKIYGIAPLNKDEIIEEYLDYGQRLSKHVVDCTRTIHAAAKNKKNILFEGAQGTLLDLDHGTYPYVTSSNPISGGACIGAGVGPTLIDRVIGVAKAYTTRVGEGPFPTELQGSINDQLCDRGSEFGTTTGRRRRCGWFDGIIGKYAVYVNGLDCLAVTKLDVLDELDEIQVCIAYELDGKEIDYFPTNSDDLKKCKPIFKKLKGWQCSTANCRKLSDLPENAMNYLRFLAELMEVPIAIVSLGANRDQTIVIEDPIHGPKRALLR.

Residues Gly12–Lys18 and Gly40–Thr42 contribute to the GTP site. Catalysis depends on Asp13, which acts as the Proton acceptor. Mg(2+) is bound by residues Asp13 and Gly40. IMP-binding positions include Asp13–Lys16, Asn38–His41, Thr128, Arg142, Gln223, Thr238, and Arg302. His41 (proton donor) is an active-site residue. Thr298 to Arg304 provides a ligand contact to substrate. GTP contacts are provided by residues Arg304, Lys330–Asp332, and Ser412–Gly414.

It belongs to the adenylosuccinate synthetase family. In terms of assembly, homodimer. Mg(2+) is required as a cofactor.

The protein resides in the cytoplasm. It carries out the reaction IMP + L-aspartate + GTP = N(6)-(1,2-dicarboxyethyl)-AMP + GDP + phosphate + 2 H(+). Its pathway is purine metabolism; AMP biosynthesis via de novo pathway; AMP from IMP: step 1/2. Its function is as follows. Plays an important role in the de novo pathway of purine nucleotide biosynthesis. Catalyzes the first committed step in the biosynthesis of AMP from IMP. The polypeptide is Adenylosuccinate synthetase (Prochlorococcus marinus subsp. pastoris (strain CCMP1986 / NIES-2087 / MED4)).